Here is a 426-residue protein sequence, read N- to C-terminus: Gamma-glutamyl phosphate reductase (426 aa).

Belongs to the gamma-glutamyl phosphate reductase family.

It is found in the cytoplasm. It carries out the reaction L-glutamate 5-semialdehyde + phosphate + NADP(+) = L-glutamyl 5-phosphate + NADPH + H(+). It functions in the pathway amino-acid biosynthesis; L-proline biosynthesis; L-glutamate 5-semialdehyde from L-glutamate: step 2/2. Its function is as follows. Catalyzes the NADPH-dependent reduction of L-glutamate 5-phosphate into L-glutamate 5-semialdehyde and phosphate. The product spontaneously undergoes cyclization to form 1-pyrroline-5-carboxylate. In Cupriavidus necator (strain ATCC 17699 / DSM 428 / KCTC 22496 / NCIMB 10442 / H16 / Stanier 337) (Ralstonia eutropha), this protein is Gamma-glutamyl phosphate reductase.